We begin with the raw amino-acid sequence, 257 residues long: Chymotrypsin-like elastase family member 3B (257 aa).

Residues 1-2 constitute a signal peptide (or 3); sequence VA. Positions 3–15 are cleaved as a propeptide — activation peptide; the sequence is SGYGPPSSHPSSR. Residues 16–255 enclose the Peptidase S1 domain; sequence VVNGEDAVPY…FIDWIEETIA (240 aa). N-linked (GlcNAc...) asparagine glycosylation is present at asparagine 38. 2 disulfides stabilise this stretch: cysteine 45/cysteine 61 and cysteine 104/cysteine 107. Histidine 60 serves as the catalytic Charge relay system. Aspartate 110 functions as the Charge relay system in the catalytic mechanism. 3 disulfides stabilise this stretch: cysteine 144–cysteine 210, cysteine 175–cysteine 191, and cysteine 200–cysteine 231. Serine 204 acts as the Charge relay system in catalysis.

It belongs to the peptidase S1 family. Elastase subfamily.

The enzyme catalyses Preferential cleavage: Ala-|-Xaa. Does not hydrolyze elastin.. Functionally, efficient protease with alanine specificity but only little elastolytic activity. The sequence is that of Chymotrypsin-like elastase family member 3B (CELA3B) from Macaca mulatta (Rhesus macaque).